The primary structure comprises 20 residues: Snaclec ophioluxin subunit alpha (20 aa).

The cysteines at positions 4 and 15 are disulfide-linked. The region spanning 11–20 (YDQHCYRIIN) is the C-type lectin domain.

It belongs to the snaclec family. Heterodimer of subunits alpha and beta; disulfide-linked. Expressed by the venom gland.

It is found in the secreted. Binds to the platelet and collagen receptor glycoprotein VI (GP6) and activates platelet aggregation. This Ophiophagus hannah (King cobra) protein is Snaclec ophioluxin subunit alpha.